The primary structure comprises 1619 residues: ATP-dependent helicase ULS1 (1619 aa).

The SUMO interacting motif; type a 1 motif lies at 7-10 (IDLT). Residues 86 to 102 (STFNNEKSSNEVKQQQV) are compositionally biased toward polar residues. Disordered regions lie at residues 86-123 (STFN…SSPS), 200-279 (NNKP…VESS), 347-371 (PILP…NSSI), and 429-450 (SGSN…SVLQ). Residues 103 to 118 (LKEETMGSSNDEKKTQ) show a composition bias toward basic and acidic residues. A Phosphoserine modification is found at Ser-121. Polar residues predominate over residues 200–210 (NNKPSQQQFSD). Positions 211–226 (PETKDNSLKSENKDQI) are enriched in basic and acidic residues. 2 stretches are compositionally biased toward polar residues: residues 242-259 (SAFQ…TIPN) and 269-279 (LPSNLSSVESS). Basic and acidic residues predominate over residues 353-366 (NMDHTTHNSHDSEQ). An SUMO interacting motif; type b 1 motif is present at residues 371 to 378 (IIILSDED). An SUMO interacting motif; type a 2 motif is present at residues 470-473 (LDTL). The SUMO interacting motif; type b 2 motif lies at 543–550 (ILVDEAEN). Positions 956-1157 (QVENSAKKGG…YSLIRFLRIP (202 aa)) constitute a Helicase ATP-binding domain. Residue 969 to 976 (DDMGLGKT) coordinates ATP. Residues 1330-1386 (CFWCMEQLEPEAMSVLTGCGHLICDTCIEPFIEESSMLPQAKKTKGGAFAIPCKDCQ) form an RING-type zinc finger. The 160-residue stretch at 1447–1606 (QCIQVIQRVF…GKIKEVNSLG (160 aa)) folds into the Helicase C-terminal domain.

Belongs to the SNF2/RAD54 helicase family. As to quaternary structure, interacts with CDC3, CDC11, EBP2, SIR4, UBC4 and SUMO/SMT3.

Its subcellular location is the nucleus. ATP-dependent helicase involved mating type switching and in silencing interference through its interaction with the silencing regulator SIR4. Cooperates with UBC4 and UBC5 to mediate ubiquitination of SUMO conjugates. This chain is ATP-dependent helicase ULS1 (ULS1), found in Saccharomyces cerevisiae (strain ATCC 204508 / S288c) (Baker's yeast).